Here is a 299-residue protein sequence, read N- to C-terminus: Coenzyme PQQ synthesis protein B (299 aa).

This sequence belongs to the PqqB family.

It participates in cofactor biosynthesis; pyrroloquinoline quinone biosynthesis. In terms of biological role, may be involved in the transport of PQQ or its precursor to the periplasm. The polypeptide is Coenzyme PQQ synthesis protein B (Methylorubrum extorquens (strain CM4 / NCIMB 13688) (Methylobacterium extorquens)).